Here is a 459-residue protein sequence, read N- to C-terminus: Uterine milk protein (459 aa).

The signal sequence occupies residues 1–25 (MSHGRMNLALSLVFILCGLFNSIFC). A glycan (N-linked (GlcNAc...) asparagine) is linked at Asn268.

Belongs to the serpin family. UTMP subfamily.

The protein is Uterine milk protein of Bos taurus (Bovine).